Here is a 441-residue protein sequence, read N- to C-terminus: Probable acetylornithine aminotransferase, mitochondrial (441 aa).

Lysine 294 carries the post-translational modification N6-(pyridoxal phosphate)lysine.

The protein belongs to the class-III pyridoxal-phosphate-dependent aminotransferase family. Requires pyridoxal 5'-phosphate as cofactor.

The protein resides in the mitochondrion matrix. The enzyme catalyses N(2)-acetyl-L-ornithine + 2-oxoglutarate = N-acetyl-L-glutamate 5-semialdehyde + L-glutamate. The protein operates within amino-acid biosynthesis; L-arginine biosynthesis; N(2)-acetyl-L-ornithine from L-glutamate: step 4/4. The polypeptide is Probable acetylornithine aminotransferase, mitochondrial (arg1) (Schizosaccharomyces pombe (strain 972 / ATCC 24843) (Fission yeast)).